A 312-amino-acid chain; its full sequence is Isethionate sulfite-lyase activating enzyme (312 aa).

Residues 20–304 (HDGPGIRTIV…GLQKTALDIL (285 aa)) enclose the Radical SAM core domain. Residues Cys-34, Cys-38, Cys-41, Cys-60, Cys-66, Cys-69, Cys-73, Cys-93, Cys-96, Cys-100, and Cys-104 each contribute to the [4Fe-4S] cluster site. Residue 40–42 (WCS) participates in S-adenosyl-L-methionine binding. 2 consecutive 4Fe-4S ferredoxin-type domains span residues 51–83 (AELA…CGDD) and 84–115 (DKPR…YGKK). Residues Gly-144, 193-195 (DIK), and His-267 each bind S-adenosyl-L-methionine.

Belongs to the organic radical-activating enzymes family. Monomer. Requires [4Fe-4S] cluster as cofactor.

It carries out the reaction glycyl-[protein] + reduced [flavodoxin] + S-adenosyl-L-methionine = glycin-2-yl radical-[protein] + semiquinone [flavodoxin] + 5'-deoxyadenosine + L-methionine + H(+). It participates in organosulfur degradation; alkanesulfonate degradation. Involved in an anaerobic respiration pathway that converts the sulfonate isethionate (2-hydroxyethanesulfonate) to ammonia, acetate and sulfide. Catalyzes activation of the isethionate sulfite-lyase IslA under anaerobic conditions by generation of an organic free radical on a glycine residue, via a homolytic cleavage of S-adenosyl-L-methionine (SAM). This Desulfovibrio desulfuricans (strain ATCC 27774 / DSM 6949 / MB) protein is Isethionate sulfite-lyase activating enzyme.